A 285-amino-acid chain; its full sequence is uncharacterized protein (285 aa).

The region spanning 92-199 (TLLLADVEES…PTINRTARLR (108 aa)) is the Guanylate cyclase domain.

The protein belongs to the adenylyl cyclase class-4/guanylyl cyclase family.

This is an uncharacterized protein from Mycobacterium tuberculosis (strain ATCC 25618 / H37Rv).